The primary structure comprises 1000 residues: Chloride channel protein D (1000 aa).

2 stretches are compositionally biased toward low complexity: residues 1-16 and 38-60; these read MSSGNPFDNGNPNDGN and NNNNNNNNNNNNNNNNNNNNSSV. Residues 1 to 90 form a disordered region; that stretch reads MSSGNPFDNG…SYDDDGDDEE (90 aa). Residues 1 to 256 lie on the Cytoplasmic side of the membrane; that stretch reads MSSGNPFDNG…LASDHEVLRW (256 aa). Residues 71–80 show a composition bias toward basic and acidic residues; the sequence is RIQEEERLTE. The next 10 membrane-spanning stretches (helical) occupy residues 257–277, 290–310, 416–436, 442–462, 493–513, 534–554, 678–698, 710–730, 733–753, and 772–792; these read IVSLFMGIFIGVIAYFSHACV, AVLELDLFLAFLTYFLLNTLL, GAGAGVAAAFSAPLGGTLFSL, FWSIALTWRAFFCCMVATYTM, IIPFLLIGVLGGLGGALFTWI, LEVFLIIGLSTCIQFFLPLFF, LGLWPMFLFCIFYLFFAAYTA, MLVIGASYGRFVGLVVYHILG, VSIDPGIYAVMGAAAFMGGVS, and YLLPLMLTVMTAKWVADALIH. CBS domains follow at residues 824–881 and 926–984; these read MAKK…ISDV and MNLT…YREL.

This sequence belongs to the chloride channel (TC 2.A.49) family.

It localises to the membrane. Functionally, voltage-gated chloride channel. Chloride channels may have several functions including the regulation of cell volume, membrane potential stabilization and signal transduction. Required for normal aggregation. The chain is Chloride channel protein D (clcD) from Dictyostelium discoideum (Social amoeba).